Consider the following 5628-residue polypeptide: Polyketide synthase ThaG (5628 aa).

One can recognise a Ketosynthase family 3 (KS3) 1 domain in the interval 13 to 448 (HDDIAVIGIA…GTNAHVVLRE (436 aa)). Active-site for beta-ketoacyl synthase 1 activity residues include C184, H319, and H361. 2 disordered regions span residues 552–613 (GNLV…DGPT) and 1156–1183 (ASPG…RAEA). The segment covering 559 to 589 (GPHDEQADHDGSGEHGEHGERARAGADDLSR) has biased composition (basic and acidic residues). A compositionally biased stretch (low complexity) spans 1156-1173 (ASPGAASSGAAAPNAASD). The segment covering 1174-1183 (ASRDTERAEA) has biased composition (basic and acidic residues). The 78-residue stretch at 1209-1286 (AHGSARLPAL…RLAGHLATRL (78 aa)) folds into the Carrier 1 domain. O-(pantetheine 4'-phosphoryl)serine is present on S1246. The Ketosynthase family 3 (KS3) 2 domain occupies 1373 to 1781 (YEPIAIVGMS…GTNAHVIVEA (409 aa)). Residues C1529, H1664, and H1704 each act as for beta-ketoacyl synthase 2 activity in the active site. The interval 1967–2099 (AREPGARERA…GVVDELNEPA (133 aa)) is N-terminal hotdog fold 1. Residues 1967-2261 (AREPGARERA…SARWRKLAGA (295 aa)) form the PKS/mFAS DH 1 domain. H1999 (proton acceptor; for dehydratase activity 1) is an active-site residue. A C-terminal hotdog fold 1 region spans residues 2113–2261 (AGERVDGAAL…SARWRKLAGA (149 aa)). D2175 (proton donor; for dehydratase activity 1) is an active-site residue. The disordered stretch occupies residues 2426 to 2446 (DADEDDRDGREPAGGPPLRDD). In terms of domain architecture, Carrier 2 spans 2702–2780 (PAARVDLHAL…AIARALDASA (79 aa)). Positions 2817 to 2836 (TPPDAGAPQRGAHAAAAEGS) are disordered. The segment covering 2822 to 2835 (GAPQRGAHAAAAEG) has biased composition (low complexity). Residues 2862–2935 (ARVGARLSAL…ELTDYFVRRH (74 aa)) form the Carrier 3 domain. The residue at position 2896 (S2896) is an O-(pantetheine 4'-phosphoryl)serine. In terms of domain architecture, Ketosynthase family 3 (KS3) 3 spans 3005–3430 (ADAIAVIGLA…GANAHVIVRE (426 aa)). Catalysis depends on for beta-ketoacyl synthase 3 activity residues C3175, H3310, and H3351. The disordered stretch occupies residues 3526-3546 (PGKKQLRGNGRARRGDAPPAG). An N-terminal hotdog fold 2 region spans residues 3621–3743 (HPMLDANRSE…GRSPSRAARG (123 aa)). A PKS/mFAS DH 2 domain is found at 3621 to 3895 (HPMLDANRSE…SRAAASWRTA (275 aa)). H3650 (proton acceptor; for dehydratase activity 2) is an active-site residue. Positions 3758 to 3895 (RAAPAFDADA…SRAAASWRTA (138 aa)) are C-terminal hotdog fold 2. Catalysis depends on D3818, which acts as the Proton donor; for dehydratase activity 2. The disordered stretch occupies residues 3917–3942 (PAAESPSAATSTSAATSPAISTSAAT). In terms of domain architecture, Carrier 4 spans 4840-4914 (TRTAALLRSL…ALAAYVGSQL (75 aa)). Residue S4874 is modified to O-(pantetheine 4'-phosphoryl)serine. A disordered region spans residues 4960-4992 (APRARTGADAPDTSLASSASSISSARASSPASP). Residues 4998-5424 (SFDVAIVGAS…GVNAHVVLEE (427 aa)) form the Ketosynthase family 3 (KS3) 4 domain. Catalysis depends on for beta-ketoacyl synthase 4 activity residues C5158, H5293, and H5339. A Carrier 5 domain is found at 5470–5544 (ARIEAVIRDA…ALRDHVAERI (75 aa)). S5504 carries the post-translational modification O-(pantetheine 4'-phosphoryl)serine. The tract at residues 5573–5603 (VSEATEASDASEASDASEASEASEASEASKA) is disordered.

Pantetheine 4'-phosphate serves as cofactor.

The protein localises to the cytoplasm. It participates in antibiotic biosynthesis. Involved in production of the polyketide antibiotic thailandamide. The polypeptide is Polyketide synthase ThaG (Burkholderia thailandensis (strain ATCC 700388 / DSM 13276 / CCUG 48851 / CIP 106301 / E264)).